Reading from the N-terminus, the 77-residue chain is Large ribosomal subunit protein bL28 (77 aa).

Belongs to the bacterial ribosomal protein bL28 family.

The chain is Large ribosomal subunit protein bL28 from Leptothrix cholodnii (strain ATCC 51168 / LMG 8142 / SP-6) (Leptothrix discophora (strain SP-6)).